The sequence spans 195 residues: Probable GTP-binding protein EngB (195 aa).

In terms of domain architecture, EngB-type G spans 22-195 (GYPEIALVGR…WKWIEDRMGE (174 aa)). Residues 30 to 37 (GRSNVGKS), 57 to 61 (GKTQT), 75 to 78 (DVPG), 142 to 145 (TKSD), and 173 to 176 (MFSA) contribute to the GTP site. Residues Ser-37 and Thr-59 each coordinate Mg(2+).

The protein belongs to the TRAFAC class TrmE-Era-EngA-EngB-Septin-like GTPase superfamily. EngB GTPase family. Mg(2+) serves as cofactor.

In terms of biological role, necessary for normal cell division and for the maintenance of normal septation. In Pediococcus pentosaceus (strain ATCC 25745 / CCUG 21536 / LMG 10740 / 183-1w), this protein is Probable GTP-binding protein EngB.